A 326-amino-acid chain; its full sequence is Adenosine receptor A1 (326 aa).

The Extracellular segment spans residues 1–10 (MPHSVSAFQA). Residues 11-33 (AYIGIEVLIALVSVPGNVLVIWA) traverse the membrane as a helical segment. At 34 to 46 (VKVNQALRDATFC) the chain is on the cytoplasmic side. A helical transmembrane segment spans residues 47-69 (FIASLAVADVAVGALVIPLAILI). At 70–80 (NIGPQTYFHTC) the chain is on the extracellular side. Cysteine 80 and cysteine 169 form a disulfide bridge. Residues 81 to 102 (LMVACPVLILTQSSILALLAIA) traverse the membrane as a helical segment. Residues 103–123 (VDRYLRVKIPLRYKTVVTPRR) are Cytoplasmic-facing. A helical membrane pass occupies residues 124–146 (AAVAIAGCWILSLVVGLTPMFGW). Residues 147 to 176 (NNLSKIEMAWAANGSVGEPVIKCEFEKVIS) are Extracellular-facing. An N-linked (GlcNAc...) asparagine glycan is attached at asparagine 159. The chain crosses the membrane as a helical span at residues 177–201 (MEYMVYFNFFVWVLPPLLLMVLIYL). Residues 202-235 (EVFYLIRKQLSKKVSASSGDPQKYYGKELKIAKS) lie on the Cytoplasmic side of the membrane. The chain crosses the membrane as a helical span at residues 236 to 259 (LALILFLFALSWLPLHILNCITLF). Residues 260-267 (CPTCHKPT) are Extracellular-facing. The chain crosses the membrane as a helical span at residues 268-292 (ILTYIAIFLTHGNSAMNPIVYAFRI). At 293-326 (QKFRVTFLKIWNDHFRCQPEPPIDEDLPEEKVDD) the chain is on the cytoplasmic side. Cysteine 309 carries S-palmitoyl cysteine lipidation.

The protein belongs to the G-protein coupled receptor 1 family.

It localises to the cell membrane. Its function is as follows. Receptor for adenosine. The activity of this receptor is mediated by G proteins which inhibit adenylyl cyclase. The polypeptide is Adenosine receptor A1 (ADORA1) (Cavia porcellus (Guinea pig)).